A 92-amino-acid chain; its full sequence is Acylphosphatase (92 aa).

C5 and C49 are oxidised to a cystine. Residues 5–92 (CIIAWVYGRV…SGELTDFRIR (88 aa)) form the Acylphosphatase-like domain. Residues R20 and N38 contribute to the active site.

It belongs to the acylphosphatase family.

The catalysed reaction is an acyl phosphate + H2O = a carboxylate + phosphate + H(+). The sequence is that of Acylphosphatase from Escherichia coli O6:H1 (strain CFT073 / ATCC 700928 / UPEC).